The following is a 51-amino-acid chain: Large ribosomal subunit protein bL33 (51 aa).

The protein belongs to the bacterial ribosomal protein bL33 family. Part of the 50S ribosomal subunit. Cross-links to the P and E site tRNAs.

In Pseudomonas aeruginosa (strain ATCC 15692 / DSM 22644 / CIP 104116 / JCM 14847 / LMG 12228 / 1C / PRS 101 / PAO1), this protein is Large ribosomal subunit protein bL33.